The chain runs to 124 residues: Small ribosomal subunit protein bS6 (124 aa).

It belongs to the bacterial ribosomal protein bS6 family.

Its function is as follows. Binds together with bS18 to 16S ribosomal RNA. The chain is Small ribosomal subunit protein bS6 from Actinobacillus pleuropneumoniae serotype 5b (strain L20).